The following is a 510-amino-acid chain: Cytochrome P450 52C2 (510 aa).

Position 458 (Cys-458) interacts with heme.

Belongs to the cytochrome P450 family. Requires heme as cofactor.

The protein localises to the membrane. Its function is as follows. Together with an NADPH cytochrome P450 the enzyme system catalyzes the terminal hydroxylation as the first step in the assimilation of alkanes and fatty acids. In Candida maltosa (Yeast), this protein is Cytochrome P450 52C2 (CYP52C2).